Reading from the N-terminus, the 221-residue chain is Ras-related protein RabS (221 aa).

16 to 23 (GDNQCGKS) lines the GTP pocket. Positions 38–47 (GIQLWHGIEI) match the Effector region motif. GTP contacts are provided by residues 71-75 (DGNGG) and 137-140 (NKCD). Cys218 is modified (cysteine methyl ester). Cys218 is lipidated: S-geranylgeranyl cysteine. Residues 219-221 (IIN) constitute a propeptide, removed in mature form.

Belongs to the small GTPase superfamily. Rab family.

Its subcellular location is the cell membrane. This chain is Ras-related protein RabS (rabS), found in Dictyostelium discoideum (Social amoeba).